The sequence spans 474 residues: GTPase Der (474 aa).

EngA-type G domains are found at residues leucine 3–arginine 167 and isoleucine 204–asparagine 379. GTP contacts are provided by residues glycine 9–serine 16, aspartate 56–leucine 60, asparagine 119–glutamate 122, glycine 210–serine 217, aspartate 257–leucine 261, and asparagine 322–aspartate 325. The 85-residue stretch at arginine 380–aspartate 464 folds into the KH-like domain.

It belongs to the TRAFAC class TrmE-Era-EngA-EngB-Septin-like GTPase superfamily. EngA (Der) GTPase family. Associates with the 50S ribosomal subunit.

In terms of biological role, GTPase that plays an essential role in the late steps of ribosome biogenesis. This chain is GTPase Der, found in Bartonella tribocorum (strain CIP 105476 / IBS 506).